Here is a 254-residue protein sequence, read N- to C-terminus: Trans-aconitate 2-methyltransferase (254 aa).

The protein belongs to the methyltransferase superfamily. Tam family.

It localises to the cytoplasm. The catalysed reaction is trans-aconitate + S-adenosyl-L-methionine = (E)-3-(methoxycarbonyl)pent-2-enedioate + S-adenosyl-L-homocysteine. Its function is as follows. Catalyzes the S-adenosylmethionine monomethyl esterification of trans-aconitate. The protein is Trans-aconitate 2-methyltransferase of Rhodococcus jostii (strain RHA1).